The chain runs to 266 residues: MASTQCFLHHHALSTPARTSLVRGIVPSLKSNQLLVCRAQNKQSAPQQDNVNSVSVSRRLALTLLIGAAAVGSKVSPADAAYGEAANVFGKPKTDTDFQTYNGDGFKLQIPSKWNPNKEVEYPGQVLRFEDNFDATSNVIVAITPTDKKSITDFGSPEQFLSQVDYLLGRQAYSGKTDSEGGFESDAVAIANVLETSTAEVGGKQYYYLSILTRTADGNEGGKHQLVTATVNDGKLYICKAQAGDKRWFKGAKKFVENTATSFSLA.

A chloroplast-targeting transit peptide spans 1-80; that stretch reads MASTQCFLHH…VGSKVSPADA (80 aa).

This sequence belongs to the PsbP family.

The protein localises to the plastid. It is found in the chloroplast thylakoid membrane. In terms of biological role, may be involved in the regulation of photosystem II. In Nicotiana tabacum (Common tobacco), this protein is Oxygen-evolving enhancer protein 2-3, chloroplastic (PSBP3).